A 166-amino-acid chain; its full sequence is Regulatory protein RecX (166 aa).

The protein belongs to the RecX family.

The protein resides in the cytoplasm. Functionally, modulates RecA activity. This Escherichia coli (strain K12 / MC4100 / BW2952) protein is Regulatory protein RecX.